Here is a 100-residue protein sequence, read N- to C-terminus: Urease subunit gamma (100 aa).

Belongs to the urease gamma subunit family. In terms of assembly, heterotrimer of UreA (gamma), UreB (beta) and UreC (alpha) subunits. Three heterotrimers associate to form the active enzyme.

The protein resides in the cytoplasm. The catalysed reaction is urea + 2 H2O + H(+) = hydrogencarbonate + 2 NH4(+). Its pathway is nitrogen metabolism; urea degradation; CO(2) and NH(3) from urea (urease route): step 1/1. Its function is as follows. Ureolysis may allow urea to be employed as a nitrogen source for growth and produces ammonia which may protect from killing at low pH. The sequence is that of Urease subunit gamma from Streptococcus salivarius (strain 57.I).